The sequence spans 487 residues: Glutamate--tRNA ligase 2 (487 aa).

The 'HIGH' region motif lies at 24–34 (PSPTGFLHIGG). Residues 258–262 (KLSKR) carry the 'KMSKS' region motif. Lys261 provides a ligand contact to ATP.

Belongs to the class-I aminoacyl-tRNA synthetase family. Glutamate--tRNA ligase type 1 subfamily. Monomer.

The protein localises to the cytoplasm. The enzyme catalyses tRNA(Glu) + L-glutamate + ATP = L-glutamyl-tRNA(Glu) + AMP + diphosphate. Its function is as follows. Catalyzes the attachment of glutamate to tRNA(Glu) in a two-step reaction: glutamate is first activated by ATP to form Glu-AMP and then transferred to the acceptor end of tRNA(Glu). The sequence is that of Glutamate--tRNA ligase 2 from Novosphingobium aromaticivorans (strain ATCC 700278 / DSM 12444 / CCUG 56034 / CIP 105152 / NBRC 16084 / F199).